The sequence spans 75 residues: Venom serine protease inhibitor BiVSPI (75 aa).

The signal sequence occupies residues 1-20; that stretch reads MSRILFVFLAVMAIFSTSFG. Disulfide bonds link cysteine 23/cysteine 55, cysteine 32/cysteine 51, cysteine 35/cysteine 47, cysteine 39/cysteine 75, and cysteine 57/cysteine 69. A TIL domain is found at 23–75; it reads CGLNEEFKSCGSCEPTCAKPRVTICTMECKIGCQCKSGYLRNGEGTCVLPEKC.

Belongs to the serine protease inhibitor-like (TIL domain-containing) family. Post-translationally, may be O-glycosylated. As to expression, expressed by the venom gland (at protein level) and expressed in fat body.

It is found in the secreted. Its subcellular location is the target cell membrane. In terms of biological role, antimicrobial venom serine protease inhibitor. Exhibits inhibitory activity against chymotrypsin (IC(50)=19.56 nM, Ki=15.24 nM) and microbial serine proteases, such as subtilisin A (IC(50)=6.57 nM, Ki=6.83 nM) and proteinase K (IC(50)=7.11 nM, Ki=7.02 nM). Has not activity against trypsin, plasmin, tPA, thrombin, factor Xa or elastase. Binds and inhibits Gram-positive bacteria (B.subtilis (MIC=29.45 uM), B.thuringiensis (MIC=91.03 uM)) and the entomopathogenic fungus B.bassiana (MIC=30.09 uM) but not to E.coli. This is Venom serine protease inhibitor BiVSPI from Bombus ignitus (Bumblebee).